A 907-amino-acid chain; its full sequence is DNA (cytosine-5)-methyltransferase CMT3 (907 aa).

A compositionally biased stretch (low complexity) spans 1 to 15; that stretch reads MAPSSPSSAAAPTRT. Residues 1 to 154 form a disordered region; the sequence is MAPSSPSSAA…RNAATRRPDE (154 aa). Residues 30–63 show a composition bias toward basic and acidic residues; the sequence is ATDEPSTKRTRRPKAETKPRKKKDEVKEEEKPPM. The span at 64-89 shows a compositional bias: acidic residues; it reads EDDACGEEPDAEEMALGEEAEAEEAE. 2 stretches are compositionally biased toward basic and acidic residues: residues 115–124 and 131–140; these read HGSDGDHDPE and PAKEARDKWP. The region spanning 172–297 is the BAH domain; the sequence is TLYCLHDDVY…VAYSTFANIP (126 aa). Positions 303–323 are disordered; the sequence is SGSDTASDISSDDVDSSKGKV. Residues 335 to 868 enclose the SAM-dependent MTase C5-type domain; sequence ATLLDLYSGC…YSLGLAYQRE (534 aa). The Chromo domain maps to 437–500; that stretch reads FVVEKLAGIC…EGYRRKILPL (64 aa). Cysteine 513 is a catalytic residue.

This sequence belongs to the class I-like SAM-binding methyltransferase superfamily. C5-methyltransferase family.

The protein localises to the nucleus. It catalyses the reaction a 2'-deoxycytidine in DNA + S-adenosyl-L-methionine = a 5-methyl-2'-deoxycytidine in DNA + S-adenosyl-L-homocysteine + H(+). Its function is as follows. Involved in CpXpG DNA methylation. Plays a critical role in the maintenance of CpXpG DNA methylation and suppression of a wide spectrum of transposable element (TE) activities. Required for proper plant development in reproductive stage. The sequence is that of DNA (cytosine-5)-methyltransferase CMT3 from Oryza sativa subsp. japonica (Rice).